Here is a 474-residue protein sequence, read N- to C-terminus: tRNA-2-methylthio-N(6)-dimethylallyladenosine synthase (474 aa).

One can recognise an MTTase N-terminal domain in the interval 3–120 (KKLHIKTWGC…LPEMINSVRG (118 aa)). Positions 12, 49, 83, 157, 161, and 164 each coordinate [4Fe-4S] cluster. In terms of domain architecture, Radical SAM core spans 143-375 (RAEGPTAFVS…QERINQQAMA (233 aa)). A TRAM domain is found at 378-441 (RRMLGTTQRI…PNSLRGKVVR (64 aa)).

It belongs to the methylthiotransferase family. MiaB subfamily. In terms of assembly, monomer. The cofactor is [4Fe-4S] cluster.

Its subcellular location is the cytoplasm. The catalysed reaction is N(6)-dimethylallyladenosine(37) in tRNA + (sulfur carrier)-SH + AH2 + 2 S-adenosyl-L-methionine = 2-methylsulfanyl-N(6)-dimethylallyladenosine(37) in tRNA + (sulfur carrier)-H + 5'-deoxyadenosine + L-methionine + A + S-adenosyl-L-homocysteine + 2 H(+). Its function is as follows. Catalyzes the methylthiolation of N6-(dimethylallyl)adenosine (i(6)A), leading to the formation of 2-methylthio-N6-(dimethylallyl)adenosine (ms(2)i(6)A) at position 37 in tRNAs that read codons beginning with uridine. The sequence is that of tRNA-2-methylthio-N(6)-dimethylallyladenosine synthase from Salmonella enteritidis PT4 (strain P125109).